The following is a 428-amino-acid chain: GTPase Obg (428 aa).

Residues 1 to 158 (MFVDQVKIYV…RDVILELKVL (158 aa)) enclose the Obg domain. The OBG-type G domain maps to 159 to 329 (ADVGLVGFPS…LLFEVANLIE (171 aa)). GTP is bound by residues 165–172 (GFPSVGKS), 190–194 (FTTIV), 212–215 (DLPG), 282–285 (NKMD), and 310–312 (SAV). 2 residues coordinate Mg(2+): Ser-172 and Thr-192. The 79-residue stretch at 350-428 (KFDTEGVKFE…ILEYEFEFID (79 aa)) folds into the OCT domain.

This sequence belongs to the TRAFAC class OBG-HflX-like GTPase superfamily. OBG GTPase family. As to quaternary structure, monomer. It depends on Mg(2+) as a cofactor.

It is found in the cytoplasm. An essential GTPase which binds GTP, GDP and possibly (p)ppGpp with moderate affinity, with high nucleotide exchange rates and a fairly low GTP hydrolysis rate. Plays a role in control of the cell cycle, stress response, ribosome biogenesis and in those bacteria that undergo differentiation, in morphogenesis control. This chain is GTPase Obg, found in Bacillus cereus (strain B4264).